A 420-amino-acid polypeptide reads, in one-letter code: 20-oxo-5-O-mycaminosyltylactone 23-monooxygenase (420 aa).

Residues 1 to 28 (MSSSGDARPSQKGILLPAARANDTDEAA) form a disordered region. Residues His118, Arg122, Arg311, His367, and Cys369 each contribute to the heme site.

It belongs to the cytochrome P450 family.

The catalysed reaction is 20-oxo-5-O-beta-D-mycaminosyltylonolide + 2 reduced [2Fe-2S]-[ferredoxin] + O2 + 2 H(+) = 5-O-beta-D-mycaminosyltylonolide + 2 oxidized [2Fe-2S]-[ferredoxin] + H2O. It participates in antibiotic biosynthesis; tylosin biosynthesis. Involved in the biosynthesis of the complex macrolide antibiotic tylosin. Catalyzes the hydroxylation of 20-oxo-5-O-beta-mycaminosyltylactone at the C-23 position to yield 5-O-beta-mycaminosyltylonolide. The sequence is that of 20-oxo-5-O-mycaminosyltylactone 23-monooxygenase from Streptomyces fradiae (Streptomyces roseoflavus).